A 494-amino-acid polypeptide reads, in one-letter code: Cheilanthifoline synthase (494 aa).

Residues 4–24 (TIWLIISTVIIVLGIAKFLLG) traverse the membrane as a helical segment. Cys437 contacts heme.

This sequence belongs to the cytochrome P450 family. The cofactor is heme. As to expression, expressed in roots and at lower levels in stems, leaves and plantlets.

The protein localises to the endoplasmic reticulum membrane. It catalyses the reaction (S)-scoulerine + reduced [NADPH--hemoprotein reductase] + O2 = (S)-cheilanthifoline + oxidized [NADPH--hemoprotein reductase] + 2 H2O + H(+). Methylenedioxy bridge-forming cytochrome P450 involved in the biosynthesis of isoquinoline alkaloids. Converts (S)-scoulerine into (S)-cheilanthifoline, a precursor of sanguinarine. Catalyzes an oxidative reaction that does not incorporate oxygen into the product. In Argemone mexicana (Mexican prickly poppy), this protein is Cheilanthifoline synthase.